The chain runs to 30 residues: Small toxic protein BsrE (30 aa).

A helical transmembrane segment spans residues 4 to 24; the sequence is FQALMLMLAIGSFIIALLTYI.

The protein localises to the cell membrane. Toxic component of a type I toxin-antitoxin (TA) system; overexpression in the absence of cognate antisense antitoxin SR5 RNA leads to cell lysis. Base pairing occurs between the 3' UTRs of bsrE mRNA and SR5 RNA which leads to bsrE mRNA degradation initiated by RNase III (rnc) and RNase J1 (rnjA). Genetic evidence suggests an unidentified RNA-binding protein may exist that promotes TA RNA interaction. This Bacillus subtilis (strain 168) protein is Small toxic protein BsrE.